We begin with the raw amino-acid sequence, 510 residues long: Ferredoxin--nitrite reductase (510 aa).

4 residues coordinate [4Fe-4S] cluster: Cys-396, Cys-402, Cys-437, and Cys-441. Cys-441 provides a ligand contact to siroheme.

Belongs to the nitrite and sulfite reductase 4Fe-4S domain family.

The catalysed reaction is 6 oxidized [2Fe-2S]-[ferredoxin] + NH4(+) + 2 H2O = nitrite + 6 reduced [2Fe-2S]-[ferredoxin] + 8 H(+). The protein is Ferredoxin--nitrite reductase (nirA) of Leptolyngbya laminosa (Phormidium laminosum).